Consider the following 97-residue polypeptide: Large ribosomal subunit protein bL27 (97 aa).

The tract at residues 1–23 (MAHKKGASSSRNGRDSTSKRLGV) is disordered.

This sequence belongs to the bacterial ribosomal protein bL27 family.

This is Large ribosomal subunit protein bL27 from Acidothermus cellulolyticus (strain ATCC 43068 / DSM 8971 / 11B).